Here is a 138-residue protein sequence, read N- to C-terminus: Putative pre-16S rRNA nuclease (138 aa).

It belongs to the YqgF nuclease family.

The protein resides in the cytoplasm. In terms of biological role, could be a nuclease involved in processing of the 5'-end of pre-16S rRNA. In Helicobacter hepaticus (strain ATCC 51449 / 3B1), this protein is Putative pre-16S rRNA nuclease.